The following is a 500-amino-acid chain: NAD(P)H-quinone oxidoreductase chain 4, chloroplastic (500 aa).

Transmembrane regions (helical) follow at residues 4–24 (FPWL…IFLL), 37–57 (LCIC…HFQL), 87–107 (IGPI…AWPV), 111–131 (AQLF…SFSS), 134–154 (LLLF…LLSM), 167–187 (FILY…GIGL), 208–228 (ALEV…LPII), 242–262 (HYST…YGLV), 272–292 (AHCL…IYAA), 305–325 (IAYS…SLSD), 330–350 (GAIL…FLAG), 386–406 (LALP…GIIT), 416–436 (ILIA…SLSM), and 462–482 (LFVS…PDFV).

This sequence belongs to the complex I subunit 4 family.

It localises to the plastid. Its subcellular location is the chloroplast thylakoid membrane. The enzyme catalyses a plastoquinone + NADH + (n+1) H(+)(in) = a plastoquinol + NAD(+) + n H(+)(out). The catalysed reaction is a plastoquinone + NADPH + (n+1) H(+)(in) = a plastoquinol + NADP(+) + n H(+)(out). This chain is NAD(P)H-quinone oxidoreductase chain 4, chloroplastic, found in Oenothera parviflora (Small-flowered evening primrose).